Here is a 292-residue protein sequence, read N- to C-terminus: Phosphoribulokinase, plasmid (292 aa).

12–20 (GSSGAGTTS) is a binding site for ATP.

Belongs to the phosphoribulokinase family. Homooctamer.

The enzyme catalyses D-ribulose 5-phosphate + ATP = D-ribulose 1,5-bisphosphate + ADP + H(+). It participates in carbohydrate biosynthesis; Calvin cycle. The chain is Phosphoribulokinase, plasmid (cfxP) from Cupriavidus necator (strain ATCC 17699 / DSM 428 / KCTC 22496 / NCIMB 10442 / H16 / Stanier 337) (Ralstonia eutropha).